Here is a 231-residue protein sequence, read N- to C-terminus: uncharacterized protein (231 aa).

Val-10 to Val-34 lines the NADP(+) pocket. Ser-140 serves as a coordination point for substrate. Tyr-153 serves as the catalytic Proton acceptor.

The protein belongs to the short-chain dehydrogenases/reductases (SDR) family.

This is an uncharacterized protein from Staphylococcus aureus (strain COL).